The chain runs to 362 residues: Talin rod domain-containing protein 1 (362 aa).

Positions 1 to 27 (MASGSAGKPTGEAASPAPGSAVGGASS) are disordered. Alanine 2 carries the post-translational modification N-acetylalanine. The segment covering 9 to 27 (PTGEAASPAPGSAVGGASS) has biased composition (low complexity).

As to quaternary structure, may homodimerize. Interacts with F-actin. Ubiquitous.

Functionally, actin-binding protein which may have an oncogenic function and regulates cell proliferation, migration and invasion in cancer cells. This chain is Talin rod domain-containing protein 1, found in Mus musculus (Mouse).